The primary structure comprises 566 residues: CTP synthase (566 aa).

Residues 1–282 (MSIKRAQLGG…DAYIIDQLGL (282 aa)) are amidoligase domain. Serine 23 serves as a coordination point for CTP. A UTP-binding site is contributed by serine 23. ATP-binding positions include 24 to 29 (SLGKGL) and aspartate 81. Residues aspartate 81 and glutamate 156 each coordinate Mg(2+). CTP-binding positions include 163–165 (DIE), 203–208 (KTKPTQ), and lysine 239. UTP-binding positions include 203 to 208 (KTKPTQ) and lysine 239. The Glutamine amidotransferase type-1 domain maps to 308–556 (TIGLVGKYID…IGAALDRQKA (249 aa)). Glycine 371 is an L-glutamine binding site. Cysteine 398 serves as the catalytic Nucleophile; for glutamine hydrolysis. L-glutamine-binding positions include 399–402 (LGLQ), glutamate 422, and arginine 482. Residues histidine 529 and glutamate 531 contribute to the active site.

It belongs to the CTP synthase family. Homotetramer.

It catalyses the reaction UTP + L-glutamine + ATP + H2O = CTP + L-glutamate + ADP + phosphate + 2 H(+). The catalysed reaction is L-glutamine + H2O = L-glutamate + NH4(+). The enzyme catalyses UTP + NH4(+) + ATP = CTP + ADP + phosphate + 2 H(+). It functions in the pathway pyrimidine metabolism; CTP biosynthesis via de novo pathway; CTP from UDP: step 2/2. Allosterically activated by GTP, when glutamine is the substrate; GTP has no effect on the reaction when ammonia is the substrate. The allosteric effector GTP functions by stabilizing the protein conformation that binds the tetrahedral intermediate(s) formed during glutamine hydrolysis. Inhibited by the product CTP, via allosteric rather than competitive inhibition. Functionally, catalyzes the ATP-dependent amination of UTP to CTP with either L-glutamine or ammonia as the source of nitrogen. Regulates intracellular CTP levels through interactions with the four ribonucleotide triphosphates. This Leifsonia xyli subsp. xyli (strain CTCB07) protein is CTP synthase.